A 295-amino-acid polypeptide reads, in one-letter code: Probable endonuclease 4 (295 aa).

Zn(2+) contacts are provided by H78, H118, E154, D188, H191, H225, D238, H240, and E270.

It belongs to the AP endonuclease 2 family. Zn(2+) is required as a cofactor.

The enzyme catalyses Endonucleolytic cleavage to 5'-phosphooligonucleotide end-products.. Its function is as follows. Endonuclease IV plays a role in DNA repair. It cleaves phosphodiester bonds at apurinic or apyrimidinic (AP) sites, generating a 3'-hydroxyl group and a 5'-terminal sugar phosphate. The sequence is that of Probable endonuclease 4 from Vibrio parahaemolyticus serotype O3:K6 (strain RIMD 2210633).